The following is a 98-amino-acid chain: Large ribosomal subunit protein uL23 (98 aa).

The protein belongs to the universal ribosomal protein uL23 family. In terms of assembly, part of the 50S ribosomal subunit. Contacts protein L29, and trigger factor when it is bound to the ribosome.

One of the early assembly proteins it binds 23S rRNA. One of the proteins that surrounds the polypeptide exit tunnel on the outside of the ribosome. Forms the main docking site for trigger factor binding to the ribosome. The sequence is that of Large ribosomal subunit protein uL23 from Borreliella afzelii (strain PKo) (Borrelia afzelii).